The primary structure comprises 179 residues: Orotate phosphoribosyltransferase (179 aa).

5-phospho-alpha-D-ribose 1-diphosphate-binding positions include Arg94, Lys95, Lys98, His100, and 120–128 (EDTSTTGAS). Orotate-binding residues include Thr124 and Arg152.

This sequence belongs to the purine/pyrimidine phosphoribosyltransferase family. PyrE subfamily. In terms of assembly, homodimer. Requires Mg(2+) as cofactor.

It carries out the reaction orotidine 5'-phosphate + diphosphate = orotate + 5-phospho-alpha-D-ribose 1-diphosphate. It participates in pyrimidine metabolism; UMP biosynthesis via de novo pathway; UMP from orotate: step 1/2. In terms of biological role, catalyzes the transfer of a ribosyl phosphate group from 5-phosphoribose 1-diphosphate to orotate, leading to the formation of orotidine monophosphate (OMP). The sequence is that of Orotate phosphoribosyltransferase from Mycobacterium leprae (strain TN).